The primary structure comprises 759 residues: Fidgetin (759 aa).

4 disordered regions span residues 89–111 (SNYS…PWQP), 200–237 (SQAT…PGYN), 258–293 (VGSG…VPGY), and 337–429 (SYGQ…VMSE). Composition is skewed to pro residues over residues 221-232 (QPPPPPPPPPAL) and 266-289 (GAPP…PPTT). Composition is skewed to polar residues over residues 337–347 (SYGQQRSTQSP) and 382–418 (LMPS…SSES). Thr-400 carries the phosphothreonine modification. ATP is bound by residues Ala-489 and 529–534 (GTGKTL).

The protein belongs to the AAA ATPase family. In terms of assembly, interacts with AKAP8 (via C-terminus). In terms of tissue distribution, widely expressed.

The protein localises to the nucleus matrix. Its subcellular location is the cytoplasm. It localises to the cytoskeleton. It is found in the microtubule organizing center. The protein resides in the centrosome. Functionally, ATP-dependent microtubule severing protein. Severs microtubules along their length and depolymerizes their ends, primarily the minus-end, suppressing microtubule growth from and attachment to centrosomes. Microtubule severing may promote rapid reorganization of cellular microtubule arrays and the release of microtubules from the centrosome following nucleation. Microtubule release from the mitotic spindle poles may allow depolymerization of the microtubule end proximal to the spindle pole, leading to poleward microtubule flux and poleward motion of chromosome. This is Fidgetin (Fign) from Mus musculus (Mouse).